The chain runs to 104 residues: MASELKEYLVIIPDLPDVLAKRQVLLKPHNQDAAPLVKAGRVPFFGSTLAHHSAEGQQVAENGTVMIIKAESEEEIKEIIRKDIFTIEGVWDFGRLSIWPFKSK.

Belongs to the YciI family.

It functions in the pathway mycotoxin biosynthesis. Functionally, part of the gene cluster that mediates the biosynthesis of fusaric acid, a mycotoxin with low to moderate toxicity to animals and humans, but with high phytotoxic properties. L-aspartate is suggested as fusaric acid amino acid precursor that is activated and further processed to O-acetyl-L-homoserine by cluster enzymes aspartate kinase FUB3 and homoserine O-acetyltransferase FUB5, as well as enzymes of the primary metabolism. The polyketide synthase (PKS) FUB1 generates the triketide trans-2-hexenal which is presumptively released by the hydrolase FUB4 and linked to the NRPS-bound amino acid precursor by NAD(P)-dependent dehydrogenase FUB6. FUB1, FUB4, and the non-canonical NRPS Fub8 may form an enzyme complex. Further processing of the NRPS-bound intermediate might be carried out by FUB6 and the sulfhydrylase FUB7, enabling a spontaneous electrocyclization to close the carbon backbone of fusaric acid. Dihydrofusaric acid is likely to be released via reduction by the thioester reductase (TR) domain of FUB8 whereupon the final oxidation to fusaric acid may (also) be performed by the FMN-dependent dehydrogenase FUB9. The chain is Fusaric acid biosynthesis protein 2 from Gibberella moniliformis (strain M3125 / FGSC 7600) (Maize ear and stalk rot fungus).